A 327-amino-acid polypeptide reads, in one-letter code: N-acetyl-gamma-glutamyl-phosphate reductase (327 aa).

Residue Cys136 is part of the active site.

It belongs to the NAGSA dehydrogenase family. Type 1 subfamily.

Its subcellular location is the cytoplasm. It catalyses the reaction N-acetyl-L-glutamate 5-semialdehyde + phosphate + NADP(+) = N-acetyl-L-glutamyl 5-phosphate + NADPH + H(+). It functions in the pathway amino-acid biosynthesis; L-arginine biosynthesis; N(2)-acetyl-L-ornithine from L-glutamate: step 3/4. In terms of biological role, catalyzes the NADPH-dependent reduction of N-acetyl-5-glutamyl phosphate to yield N-acetyl-L-glutamate 5-semialdehyde. In Xylella fastidiosa (strain M23), this protein is N-acetyl-gamma-glutamyl-phosphate reductase.